The following is a 124-amino-acid chain: Replication restart protein PriB (124 aa).

Residues 12–112 form the SSB domain; that stretch reads IDNCLILSGS…VHAEHIEFID (101 aa).

The protein belongs to the PriB family. In terms of assembly, homodimer. Interacts with PriA and DnaT. Component of the replication restart primosome. Primosome assembly occurs via a 'hand-off' mechanism. PriA binds to replication forks, subsequently PriB then DnaT bind; DnaT then displaces ssDNA to generate the helicase loading substrate.

Functionally, involved in the restart of stalled replication forks, which reloads the replicative helicase on sites other than the origin of replication; the PriA-PriB pathway is the major replication restart pathway. During primosome assembly it facilitates complex formation between PriA and DnaT on DNA; stabilizes PriA on DNA. Stimulates the DNA unwinding activity of PriA helicase. This is Replication restart protein PriB from Actinobacillus pleuropneumoniae serotype 5b (strain L20).